Here is a 396-residue protein sequence, read N- to C-terminus: Tryptophan synthase beta chain (396 aa).

At Lys86 the chain carries N6-(pyridoxal phosphate)lysine.

The protein belongs to the TrpB family. In terms of assembly, tetramer of two alpha and two beta chains. Requires pyridoxal 5'-phosphate as cofactor.

It catalyses the reaction (1S,2R)-1-C-(indol-3-yl)glycerol 3-phosphate + L-serine = D-glyceraldehyde 3-phosphate + L-tryptophan + H2O. The protein operates within amino-acid biosynthesis; L-tryptophan biosynthesis; L-tryptophan from chorismate: step 5/5. Functionally, the beta subunit is responsible for the synthesis of L-tryptophan from indole and L-serine. This is Tryptophan synthase beta chain from Vibrio vulnificus (strain CMCP6).